The chain runs to 99 residues: Malonate decarboxylase acyl carrier protein (99 aa).

At S25 the chain carries O-(phosphoribosyl dephospho-coenzyme A)serine.

Belongs to the MdcC family. In terms of processing, covalently binds the prosthetic group of malonate decarboxylase.

It localises to the cytoplasm. Functionally, subunit of malonate decarboxylase, it is an acyl carrier protein to which acetyl and malonyl thioester residues are bound via a 2'-(5''-phosphoribosyl)-3'-dephospho-CoA prosthetic group and turn over during the catalytic mechanism. In Pseudomonas syringae pv. tomato (strain ATCC BAA-871 / DC3000), this protein is Malonate decarboxylase acyl carrier protein.